Consider the following 510-residue polypeptide: Leucine-rich repeat-containing protein 53 (510 aa).

LRR repeat units follow at residues Thr34–Leu55, Asn58–Gly79, Met82–Thr102, Ser108–Asn129, Gly132–Gly153, Ser158–Pro179, and Gln182–Leu203. Residues Asn214–Pro271 form the LRRCT domain. Residues Leu294 to Phe314 traverse the membrane as a helical segment.

The protein resides in the membrane. This chain is Leucine-rich repeat-containing protein 53 (LRRC53), found in Macaca fascicularis (Crab-eating macaque).